The following is a 116-amino-acid chain: CDKN2AIP N-terminal-like protein (116 aa).

At Met1 the chain carries N-acetylmethionine. Positions 24–116 constitute an XRN2-binding (XTBD) domain; the sequence is AEQFRSYSES…RSELMRKHQS (93 aa).

The protein belongs to the CARF family. Interacts with XRN2; the interaction is direct.

The protein is CDKN2AIP N-terminal-like protein (Cdkn2aipnl) of Mus musculus (Mouse).